A 238-amino-acid polypeptide reads, in one-letter code: Nuclear transcription factor Y subunit B-9 (238 aa).

Residues 64–70 (MPIANVI) mediate DNA binding. The segment at 91-102 (IQECVSEYISFV) is subunit association domain (SAD). The disordered stretch occupies residues 203–238 (RYYQNGSSGQDESSVGGGSSSSINGMPAFDHYGQYK). The span at 208–227 (GSSGQDESSVGGGSSSSING) shows a compositional bias: low complexity.

The protein belongs to the NFYB/HAP3 subunit family. Heterotrimeric transcription factor composed of three components, NF-YA, NF-YB and NF-YC. NF-YB and NF-YC must interact and dimerize for NF-YA association and DNA binding. Interacts with PRN1. Expressed in green siliques. Present in etiolated seedlings.

It localises to the nucleus. In terms of biological role, component of the NF-Y/HAP transcription factor complex. The NF-Y complex stimulates the transcription of various genes by recognizing and binding to a CCAAT motif in promoters. Acts as a central regulator of the embryogenesis. Required for the speciation of cotyledon identity and the completion of embryo maturation. Controls seed storage protein genes through the regulation of FUS3 and ABI3. Involved in the blue light (BL) and abscisic acid (ABA) signaling pathways. This is Nuclear transcription factor Y subunit B-9 (NFYB9) from Arabidopsis thaliana (Mouse-ear cress).